The primary structure comprises 1269 residues: Multifunctional 2-oxoglutarate metabolism enzyme (1269 aa).

The tract at residues 1–41 (MSSSPSPFGQNEWLVEEMYRKFREDPSSVDPSWHEFLVDYN) is 2-oxoglutarate dehydrogenase E1, N-terminal part. Basic and acidic residues predominate over residues 23–37 (REDPSSVDPSWHEFL). Residues 23-145 (REDPSSVDPS…AQPADDSDQN (123 aa)) are disordered. The linker stretch occupies residues 42-107 (PEPTTDSSAS…SKPQAKAKPA (66 aa)). Residues 43 to 58 (EPTTDSSASENGQQTR) are compositionally biased toward polar residues. The segment covering 63-75 (KAPPEPAPAPAPK) has biased composition (pro residues). Residues 108 to 378 (ESKSSTKPAD…LRTVHQLLLS (271 aa)) form a succinyltransferase E2 region. Catalysis depends on His-357, which acts as the Proton acceptor; for succinyltransferase activity. The 2-oxoglutarate dehydrogenase E1, C-terminal part stretch occupies residues 379–1269 (DDFFDEIFRE…QEILDEAFAP (891 aa)). Arg-583 provides a ligand contact to thiamine diphosphate. 2-oxoglutarate-binding residues include His-622 and Ser-647. Residues Ser-647, Leu-649, Asp-686, Ala-687, Ala-688, and Asn-719 each contribute to the thiamine diphosphate site. Asp-686 serves as a coordination point for Mg(2+). Residues Asn-719 and Ile-721 each coordinate Mg(2+). A coiled-coil region spans residues 824 to 855 (DISMKEAEDALRDYQGQLEQVFNEVRELEKHE). 2-oxoglutarate is bound at residue His-1061. Residues Thr-1079, Arg-1095, Lys-1130, Ser-1133, Gln-1183, Arg-1190, and Arg-1191 each contribute to the acetyl-CoA site.

Belongs to the 2-oxoacid dehydrogenase family. Kgd subfamily. Homodimer. The 2-oxoglutarate dehydrogenase (ODH) complex contains multiple copies of three enzymatic components: 2-oxoglutarate dehydrogenase (E1), dihydrolipoamide succinyltransferase (E2) and lipoamide dehydrogenase (E3). Requires Mg(2+) as cofactor. It depends on thiamine diphosphate as a cofactor.

The enzyme catalyses glyoxylate + 2-oxoglutarate + H(+) = 2-hydroxy-3-oxoadipate + CO2. It carries out the reaction 2-oxoglutarate + H(+) = succinate semialdehyde + CO2. The catalysed reaction is N(6)-[(R)-lipoyl]-L-lysyl-[protein] + 2-oxoglutarate + H(+) = N(6)-[(R)-S(8)-succinyldihydrolipoyl]-L-lysyl-[protein] + CO2. It catalyses the reaction N(6)-[(R)-dihydrolipoyl]-L-lysyl-[protein] + succinyl-CoA = N(6)-[(R)-S(8)-succinyldihydrolipoyl]-L-lysyl-[protein] + CoA. It functions in the pathway carbohydrate metabolism; tricarboxylic acid cycle; succinate from 2-oxoglutarate (transferase route): step 1/2. It participates in carbohydrate metabolism; tricarboxylic acid cycle; succinyl-CoA from 2-oxoglutarate (dehydrogenase route): step 1/1. Its activity is regulated as follows. Alpha-ketoglutarate dehydrogenase and decarboxylase activities are inhibited by unphosphorylated GarA, and allosterically activated by acetyl-CoA, the main substrate of the TCA cycle. Its function is as follows. Shows three enzymatic activities that share a first common step, the attack of thiamine-PP on 2-oxoglutarate (alpha-ketoglutarate, KG), leading to the formation of an enamine-thiamine-PP intermediate upon decarboxylation. Thus, displays KGD activity, catalyzing the decarboxylation from five-carbon 2-oxoglutarate to four-carbon succinate semialdehyde (SSA). Also catalyzes C-C bond formation between the activated aldehyde formed after decarboxylation of alpha-ketoglutarate and the carbonyl of glyoxylate (GLX), to yield 2-hydroxy-3-oxoadipate (HOA), which spontaneously decarboxylates to form 5-hydroxylevulinate (HLA). And is also a component of the 2-oxoglutarate dehydrogenase (ODH) complex, that catalyzes the overall conversion of 2-oxoglutarate to succinyl-CoA and CO(2). The KG decarboxylase and KG dehydrogenase reactions provide two alternative, tightly regulated, pathways connecting the oxidative and reductive branches of the TCA cycle. This Mycobacterium sp. (strain KMS) protein is Multifunctional 2-oxoglutarate metabolism enzyme (kgd).